We begin with the raw amino-acid sequence, 753 residues long: Catalase-peroxidase (753 aa).

A signal peptide spans 1–39; it reads MLPRVNKRSNCIAKKTSNRLISAVSLAIASLCISQSALA. The tryptophyl-tyrosyl-methioninium (Trp-Tyr) (with M-267) cross-link spans 118 to 241; the sequence is WHSTGTYRMS…LAAVQMGLIY (124 aa). The active-site Proton acceptor is H119. The tryptophyl-tyrosyl-methioninium (Tyr-Met) (with W-118) cross-link spans 241-267; the sequence is YVNPEGPNGNHDPISAAADIRDVFARM. Residue H282 participates in heme b binding.

The protein belongs to the peroxidase family. Peroxidase/catalase subfamily. As to quaternary structure, homodimer or homotetramer. Heme b is required as a cofactor. In terms of processing, formation of the three residue Trp-Tyr-Met cross-link is important for the catalase, but not the peroxidase activity of the enzyme.

It carries out the reaction H2O2 + AH2 = A + 2 H2O. The enzyme catalyses 2 H2O2 = O2 + 2 H2O. Its function is as follows. Bifunctional enzyme with both catalase and broad-spectrum peroxidase activity. The polypeptide is Catalase-peroxidase (Pseudoalteromonas atlantica (strain T6c / ATCC BAA-1087)).